Consider the following 189-residue polypeptide: MLNIVIFGAPGSGKGTQSERIVEKYGINHISTGDVLRAEIKNGTELGKTAKGYIDQGQLIPDELMVDILASVFDSFKDSKGVIFDGFPRTIPQAEALKVMLKERGQDISVMLDLDVPEEELMTRLIKRGKESGRADDNEETIKKRLVVYNTQTSPLKEYYKGEGKYQHINGLGTMEGIFEDICKAVDTL.

Residue 11–16 participates in ATP binding; it reads GSGKGT. The NMP stretch occupies residues 31–60; the sequence is STGDVLRAEIKNGTELGKTAKGYIDQGQLI. Residues Thr-32, Arg-37, 58-60, 86-89, and Gln-93 contribute to the AMP site; these read QLI and GFPR. An LID region spans residues 127–137; sequence KRGKESGRADD. An ATP-binding site is contributed by Arg-128. AMP-binding residues include Arg-134 and Arg-145. Residue Gly-173 coordinates ATP.

This sequence belongs to the adenylate kinase family. In terms of assembly, monomer.

The protein localises to the cytoplasm. It catalyses the reaction AMP + ATP = 2 ADP. The protein operates within purine metabolism; AMP biosynthesis via salvage pathway; AMP from ADP: step 1/1. Functionally, catalyzes the reversible transfer of the terminal phosphate group between ATP and AMP. Plays an important role in cellular energy homeostasis and in adenine nucleotide metabolism. The sequence is that of Adenylate kinase from Bacteroides fragilis (strain ATCC 25285 / DSM 2151 / CCUG 4856 / JCM 11019 / LMG 10263 / NCTC 9343 / Onslow / VPI 2553 / EN-2).